The primary structure comprises 710 residues: Solute carrier organic anion transporter family member 3A1 (710 aa).

M1 carries the N-acetylmethionine modification. Positions 1-15 (MQGKKPGGSSGGGRS) are enriched in gly residues. The disordered stretch occupies residues 1-25 (MQGKKPGGSSGGGRSGELQGDEAQR). Residues 1–40 (MQGKKPGGSSGGGRSGELQGDEAQRNKKKKKKVSCFSNIK) are Cytoplasmic-facing. Residues 41 to 60 (IFLVSECALMLAQGTVGAYL) traverse the membrane as a helical segment. At 61 to 79 (VSVLTTLERRFNLQSADVG) the chain is on the extracellular side. The chain crosses the membrane as a helical span at residues 80-100 (VIASSFEIGNLALILFVSYFG). The Cytoplasmic segment spans residues 101 to 106 (ARGHRP). The chain crosses the membrane as a helical span at residues 107-131 (RLIGCGGIVMALGALLSALPEFLTH). Over 132 to 174 (QYKYEAGEIRWGAEGRDVCATNGSSSDEGPDPDLICRNRTATN) the chain is Extracellular. Residues N153 and N169 are each glycosylated (N-linked (GlcNAc...) asparagine). A helical membrane pass occupies residues 175–203 (MMYLLLIGAQVLLGIGATPVQPLGVSYID). Topologically, residues 204–222 (DHVRRKDSSLYIGILFTML) are cytoplasmic. Residues 223 to 243 (VFGPACGFILGSFCTKIYVDA) form a helical membrane-spanning segment. Over 244–261 (VFIDTSNLDITPDDPRWI) the chain is Extracellular. Residues 262-286 (GAWWGGFLLCGALLFFSSLLMFGFP) form a helical membrane-spanning segment. Residues 287-344 (QSLPPHSEPGMESEQAMLPEREYERPKPSNGVLRHPLEPDSSASCFQQLRVIPKVTKH) are Cytoplasmic-facing. Residues 345–366 (LLSNPVFTCIVLAACMEIAVVA) form a helical membrane-spanning segment. Residues 367–386 (GFAAFLGKYLEQQFNLTTSS) lie on the Extracellular side of the membrane. N-linked (GlcNAc...) asparagine glycosylation occurs at N381. The helical transmembrane segment at 387–410 (ANQLLGMTAIPCACLGIFLGGLLV) threads the bilayer. Over 411-414 (KKLS) the chain is Cytoplasmic. Residues 415 to 438 (LSALGAIRMAMLVNLVSTACYVSF) form a helical membrane-spanning segment. Topologically, residues 439–539 (LFLGCDTVPV…PGCQEAFLTF (101 aa)) are extracellular. N457 is a glycosylation site (N-linked (GlcNAc...) asparagine). Residues 465 to 513 (LDPYSPCNNNCECQTDSFTPVCGADGITYLSACFAGCNSTNLTGCACLT) enclose the Kazal-like domain. Intrachain disulfides connect C471–C501, C477–C497, and C486–C511. N-linked (GlcNAc...) asparagine glycosylation is found at N502, N505, and N519. A helical membrane pass occupies residues 540-562 (LCVMCVCSLIGAMAQTPSVIILI). The Cytoplasmic portion of the chain corresponds to 563 to 571 (RTVSPELKS). Residues 572–597 (YALGVLFLLLRLLGFIPPPLIFGAGI) traverse the membrane as a helical segment. The Extracellular segment spans residues 598–630 (DSTCLFWSTFCGEQGACVLYDNVVYRYLYVSIA). Residues 631–648 (IALKSFAFILYTTTWQCL) form a helical membrane-spanning segment. Topologically, residues 649 to 705 (RKNYKRYIKNHEGGLSTSEFLASTLTLDNLGRDPVPAHQTHRTKFIYNLEDHEWCEN) are cytoplasmic.

This sequence belongs to the organo anion transporter (TC 2.A.60) family. Expressed in many brain regions, including frontal cortex, brain stem and cerebellum. Associated with neuronal bodies in a punctated matter. Detected at the arcuate nucleus and the choroid plexus (at protein level). Little expression, if any, in oligodendrocytes. In the cardiovascular system, detected in cardiac muscle cells and endothelial cells of aorta, coronary artery and left ventricular endocardium (at protein level). In the respiratory system, detected in alveolar epithelial cells and in mucosal epithelium of the trachea (at protein level). In the reproductive system, detected in spermatozoa, oocytes, smooth muscle cells of the ovary, epithelium of the glandula uterine, smooth muscle cells of the myometrium and epithelium of the endometrium (at protein level). In the kidney, detected in afferent and efferent arterioles, and the epithelium of distal tubules and collecting tubules (at protein level).

Its subcellular location is the basolateral cell membrane. It is found in the apical cell membrane. It localises to the basal cell membrane. It catalyses the reaction L-thyroxine(out) = L-thyroxine(in). The catalysed reaction is prostaglandin E1(out) = prostaglandin E1(in). The enzyme catalyses prostaglandin E2(out) = prostaglandin E2(in). It carries out the reaction prostaglandin F2alpha(out) = prostaglandin F2alpha(in). It catalyses the reaction (5Z,8Z,11Z,14Z)-eicosatetraenoate(out) = (5Z,8Z,11Z,14Z)-eicosatetraenoate(in). The catalysed reaction is taurocholate(out) = taurocholate(in). The enzyme catalyses glycocholate(out) = glycocholate(in). It carries out the reaction estrone 3-sulfate(out) = estrone 3-sulfate(in). It catalyses the reaction argipressin(out) = argipressin(in). In terms of biological role, putative organic anion antiporter with apparent broad substrate specificity. Recognizes various substrates including thyroid hormone L-thyroxine, prostanoids such as prostaglandin E1 and E2, bile acids such as taurocholate, glycolate and glycochenodeoxycholate and peptide hormones such as L-arginine vasopressin, likely operating in a tissue-specific manner. The transport mechanism, its electrogenicity and potential tissue-specific counterions remain to be elucidated. This is Solute carrier organic anion transporter family member 3A1 (Slco3a1) from Rattus norvegicus (Rat).